We begin with the raw amino-acid sequence, 717 residues long: P-loop NTPase domain-containing protein LPA1 homolog 2 (717 aa).

Disordered regions lie at residues 235–259 and 532–629; these read KKLK…SSTT and HYSS…DTIS. Polar residues-rich tracts occupy residues 243 to 259 and 532 to 545; these read VNSN…SSTT and HYSS…TSDG. The segment covering 559 to 582 has biased composition (acidic residues); sequence SDEDDEEGDDDFHEPDSDEDLSDN. Basic and acidic residues predominate over residues 583–602; sequence NDERNRDEIGSVDEESTKSD.

Its function is as follows. May be not required for the accumulation of phytic acid in seeds. Phytic acid is the primary storage form of phosphorus in cereal grains and other plant seeds. The polypeptide is P-loop NTPase domain-containing protein LPA1 homolog 2 (Arabidopsis thaliana (Mouse-ear cress)).